The following is a 486-amino-acid chain: Wax ester synthase/diacylglycerol acyltransferase 11 (486 aa).

At 1–192 (MGEDKKTARE…CNSGFFNKIW (192 aa)) the chain is on the cytoplasmic side. H144 acts as the Proton acceptor in catalysis. The chain crosses the membrane as a helical span at residues 193–213 (WLFVGLWFILRLLFNTFVDIL). Residues 214 to 486 (MFALTIFVLR…LERGLYEIEV (273 aa)) lie on the Extracellular side of the membrane.

In the N-terminal section; belongs to the long-chain O-acyltransferase family. In terms of tissue distribution, mostly expressed in inflorescences and flowers, especially at the periphery of petal epidermal cells.

It is found in the cell membrane. The protein resides in the endoplasmic reticulum membrane. The enzyme catalyses an acyl-CoA + a 1,2-diacyl-sn-glycerol = a triacyl-sn-glycerol + CoA. It catalyses the reaction a long chain fatty alcohol + a fatty acyl-CoA = a wax ester + CoA. The protein operates within glycerolipid metabolism; triacylglycerol biosynthesis. Its pathway is lipid metabolism. Bifunctional wax ester synthase/diacylglycerol acyltransferase. Involved in cuticular wax biosynthesis. Required for petals development, probably by mediating the production of fatty acids at the plasma membrane in the petal epidermis acting as lubricants that makes petal elongation smooth in narrow space between the sepals and the anthers inside floral buds. The chain is Wax ester synthase/diacylglycerol acyltransferase 11 from Arabidopsis thaliana (Mouse-ear cress).